A 297-amino-acid chain; its full sequence is Haloalkane dehalogenase (297 aa).

The AB hydrolase-1 domain occupies 47–148 (PPIVLLHGEP…AIARLVVANG (102 aa)). Residue Asp123 is the Nucleophile of the active site. Asp250 serves as the catalytic Proton donor. His279 serves as the catalytic Proton acceptor.

The protein belongs to the haloalkane dehalogenase family. Type 1 subfamily. In terms of assembly, monomer.

It catalyses the reaction 1-haloalkane + H2O = a halide anion + a primary alcohol + H(+). In terms of biological role, catalyzes hydrolytic cleavage of carbon-halogen bonds in halogenated aliphatic compounds, leading to the formation of the corresponding primary alcohols, halide ions and protons. In Mycobacterium marinum (strain ATCC BAA-535 / M), this protein is Haloalkane dehalogenase.